A 291-amino-acid polypeptide reads, in one-letter code: Nucleotide-binding protein Ccel_2290 (291 aa).

8 to 15 serves as a coordination point for ATP; it reads GMSGAGKS. 59 to 62 contacts GTP; the sequence is DIRG.

It belongs to the RapZ-like family.

In terms of biological role, displays ATPase and GTPase activities. The protein is Nucleotide-binding protein Ccel_2290 of Ruminiclostridium cellulolyticum (strain ATCC 35319 / DSM 5812 / JCM 6584 / H10) (Clostridium cellulolyticum).